The sequence spans 384 residues: Glucans biosynthesis protein C (384 aa).

The next 10 helical transmembrane spans lie at 17–37, 54–74, 91–111, 140–160, 173–193, 212–232, 240–260, 274–294, 311–331, and 338–358; these read AWLM…THSW, FIHA…SYML, VGIP…ILLQ, LWFL…FTWF, AISL…YAAI, FIVM…LAFI, FTTP…AYLL, TESV…FSLG, ASLF…AYIT, and LIGF…LYEI.

Belongs to the acyltransferase 3 family. OpgC subfamily.

Its subcellular location is the cell membrane. It participates in glycan metabolism; osmoregulated periplasmic glucan (OPG) biosynthesis. Its function is as follows. Necessary for the succinyl substitution of periplasmic glucans. Could catalyze the transfer of succinyl residues from the cytoplasmic side of the membrane to the nascent glucan backbones on the periplasmic side of the membrane. The polypeptide is Glucans biosynthesis protein C (Salmonella typhimurium (strain LT2 / SGSC1412 / ATCC 700720)).